A 479-amino-acid chain; its full sequence is Poly(A) polymerase catalytic subunit (479 aa).

Active-site residues include aspartate 202 and aspartate 204. Ca(2+) is bound by residues aspartate 202, aspartate 204, and aspartate 253.

It belongs to the poxviridae poly(A) polymerase catalytic subunit family. Heterodimer of a large (catalytic) subunit and a small (regulatory) subunit.

It catalyses the reaction RNA(n) + ATP = RNA(n)-3'-adenine ribonucleotide + diphosphate. Polymerase that creates the 3'-poly(A) tail of mRNA's. This is Poly(A) polymerase catalytic subunit (OPG063) from Homo sapiens (Human).